Here is a 282-residue protein sequence, read N- to C-terminus: Protoheme IX farnesyltransferase (282 aa).

9 consecutive transmembrane segments (helical) span residues 9–29, 39–59, 79–99, 102–122, 139–159, 165–185, 210–230, 231–251, and 261–281; these read LAKPGIIFGNLITLTGGFLLA, LPLFVYVMIGVALMIAAGCVF, LVTGDISVIQATIYGTILLIL, LVLYYLVNLLTLWIIIIGFIV, VLGGISGAIPPVAGYTAVVNI, LALFLILFFWQIPHSYAIAML, IMLFYLALFVVSCALPAVLGS, ADLFSFIVCMLVALFWMYKSI, and VFAKTVFKFSIIVITAICLTM.

Belongs to the UbiA prenyltransferase family. Protoheme IX farnesyltransferase subfamily.

Its subcellular location is the cell inner membrane. It carries out the reaction heme b + (2E,6E)-farnesyl diphosphate + H2O = Fe(II)-heme o + diphosphate. Its pathway is porphyrin-containing compound metabolism; heme O biosynthesis; heme O from protoheme: step 1/1. Functionally, converts heme B (protoheme IX) to heme O by substitution of the vinyl group on carbon 2 of heme B porphyrin ring with a hydroxyethyl farnesyl side group. The sequence is that of Protoheme IX farnesyltransferase from Francisella tularensis subsp. novicida (strain U112).